Reading from the N-terminus, the 430-residue chain is Asparagine--tRNA ligase (430 aa).

It belongs to the class-II aminoacyl-tRNA synthetase family. As to quaternary structure, homodimer.

It localises to the cytoplasm. The enzyme catalyses tRNA(Asn) + L-asparagine + ATP = L-asparaginyl-tRNA(Asn) + AMP + diphosphate + H(+). The sequence is that of Asparagine--tRNA ligase from Bacillus velezensis (strain DSM 23117 / BGSC 10A6 / LMG 26770 / FZB42) (Bacillus amyloliquefaciens subsp. plantarum).